A 643-amino-acid chain; its full sequence is Rhophilin-1 (643 aa).

The interval 1–43 is disordered; that stretch reads MILEERPDGQGTGEESSRPQDDGSIRKGYGSFVQNQPGQLQSH. Residues 15-25 are compositionally biased toward basic and acidic residues; it reads ESSRPQDDGSI. One can recognise an REM-1 domain in the interval 30-104; that stretch reads GSFVQNQPGQ…LAELSTSVDV (75 aa). Phosphoserine is present on serine 31. The segment covering 32-42 has biased composition (polar residues); it reads FVQNQPGQLQS. A BRO1 domain is found at 115–462; sequence PMIPLGLKET…LAKYSQLERE (348 aa). The region spanning 500-577 is the PDZ domain; that stretch reads PVHMTRGEGS…EGVSLQVVSL (78 aa).

The protein belongs to the RHPN family. Binds specifically to GTP-Rho. Interacts with ROPN1. As to expression, highly expressed in testis.

Has no enzymatic activity. May serve as a target for Rho, and interact with some cytoskeletal component upon Rho binding or relay a Rho signal to other molecules. The protein is Rhophilin-1 (Rhpn1) of Mus musculus (Mouse).